Reading from the N-terminus, the 701-residue chain is Glycine--tRNA ligase beta subunit (701 aa).

It belongs to the class-II aminoacyl-tRNA synthetase family. As to quaternary structure, tetramer of two alpha and two beta subunits.

It localises to the cytoplasm. It catalyses the reaction tRNA(Gly) + glycine + ATP = glycyl-tRNA(Gly) + AMP + diphosphate. This is Glycine--tRNA ligase beta subunit from Anaeromyxobacter dehalogenans (strain 2CP-C).